Here is a 359-residue protein sequence, read N- to C-terminus: Phospho-N-acetylmuramoyl-pentapeptide-transferase (359 aa).

10 helical membrane-spanning segments follow: residues 24-44 (FRALIAVIVSFLITLVLSPIF), 72-92 (FVPSMGGLIIILSLELSSILL), 100-120 (TWIMAFTVFGFAIVGFIDDFV), 134-154 (MLGQIIVSFVSASLLYFVMHI), 170-190 (LGYFYIVFVMLILIATSNAVN), 197-217 (GLAIVPAMTTAFALGIISYVA), 234-254 (AGELAIFGMAVVGAGLGFLWF), 261-281 (MFMGDVGSLGLGAALGMLAIM), 289-309 (IIAGGVFVVEALSVIIQVSVF), and 336-356 (KIVVRIWIISILLAIFTIATL).

The protein belongs to the glycosyltransferase 4 family. MraY subfamily. Mg(2+) is required as a cofactor.

It localises to the cell inner membrane. It carries out the reaction UDP-N-acetyl-alpha-D-muramoyl-L-alanyl-gamma-D-glutamyl-meso-2,6-diaminopimeloyl-D-alanyl-D-alanine + di-trans,octa-cis-undecaprenyl phosphate = di-trans,octa-cis-undecaprenyl diphospho-N-acetyl-alpha-D-muramoyl-L-alanyl-D-glutamyl-meso-2,6-diaminopimeloyl-D-alanyl-D-alanine + UMP. It functions in the pathway cell wall biogenesis; peptidoglycan biosynthesis. Catalyzes the initial step of the lipid cycle reactions in the biosynthesis of the cell wall peptidoglycan: transfers peptidoglycan precursor phospho-MurNAc-pentapeptide from UDP-MurNAc-pentapeptide onto the lipid carrier undecaprenyl phosphate, yielding undecaprenyl-pyrophosphoryl-MurNAc-pentapeptide, known as lipid I. This chain is Phospho-N-acetylmuramoyl-pentapeptide-transferase, found in Hydrogenobaculum sp. (strain Y04AAS1).